We begin with the raw amino-acid sequence, 845 residues long: Leucine--tRNA ligase (845 aa).

A 'HIGH' region motif is present at residues Pro-40–His-51. A 'KMSKS' region motif is present at residues Lys-623–Ser-627. ATP is bound at residue Lys-626.

Belongs to the class-I aminoacyl-tRNA synthetase family.

It localises to the cytoplasm. It carries out the reaction tRNA(Leu) + L-leucine + ATP = L-leucyl-tRNA(Leu) + AMP + diphosphate. The polypeptide is Leucine--tRNA ligase (Protochlamydia amoebophila (strain UWE25)).